The chain runs to 335 residues: Holliday junction branch migration complex subunit RuvB (335 aa).

The tract at residues 1-181 (MERIIEIEKM…FGMNFWMQFY (181 aa)) is large ATPase domain (RuvB-L). ATP is bound by residues Leu-20, Arg-21, Gly-62, Lys-65, Thr-66, Thr-67, 128 to 130 (EDF), Arg-171, Tyr-181, and Arg-218. Residue Thr-66 participates in Mg(2+) binding. Positions 182-252 (NIEELSQIIT…QARYALHELG (71 aa)) are small ATPAse domain (RuvB-S). Residues 255-335 (DHGFDDLDLR…LPFEPNATLF (81 aa)) are head domain (RuvB-H). DNA-binding residues include Arg-309 and Arg-314.

This sequence belongs to the RuvB family. Homohexamer. Forms an RuvA(8)-RuvB(12)-Holliday junction (HJ) complex. HJ DNA is sandwiched between 2 RuvA tetramers; dsDNA enters through RuvA and exits via RuvB. An RuvB hexamer assembles on each DNA strand where it exits the tetramer. Each RuvB hexamer is contacted by two RuvA subunits (via domain III) on 2 adjacent RuvB subunits; this complex drives branch migration. In the full resolvosome a probable DNA-RuvA(4)-RuvB(12)-RuvC(2) complex forms which resolves the HJ.

Its subcellular location is the cytoplasm. It carries out the reaction ATP + H2O = ADP + phosphate + H(+). Its function is as follows. The RuvA-RuvB-RuvC complex processes Holliday junction (HJ) DNA during genetic recombination and DNA repair, while the RuvA-RuvB complex plays an important role in the rescue of blocked DNA replication forks via replication fork reversal (RFR). RuvA specifically binds to HJ cruciform DNA, conferring on it an open structure. The RuvB hexamer acts as an ATP-dependent pump, pulling dsDNA into and through the RuvAB complex. RuvB forms 2 homohexamers on either side of HJ DNA bound by 1 or 2 RuvA tetramers; 4 subunits per hexamer contact DNA at a time. Coordinated motions by a converter formed by DNA-disengaged RuvB subunits stimulates ATP hydrolysis and nucleotide exchange. Immobilization of the converter enables RuvB to convert the ATP-contained energy into a lever motion, pulling 2 nucleotides of DNA out of the RuvA tetramer per ATP hydrolyzed, thus driving DNA branch migration. The RuvB motors rotate together with the DNA substrate, which together with the progressing nucleotide cycle form the mechanistic basis for DNA recombination by continuous HJ branch migration. Branch migration allows RuvC to scan DNA until it finds its consensus sequence, where it cleaves and resolves cruciform DNA. This is Holliday junction branch migration complex subunit RuvB from Wolinella succinogenes (strain ATCC 29543 / DSM 1740 / CCUG 13145 / JCM 31913 / LMG 7466 / NCTC 11488 / FDC 602W) (Vibrio succinogenes).